A 387-amino-acid chain; its full sequence is Mitochondrial import inner membrane translocase subunit TIM50 (387 aa).

The N-terminal 26 residues, 1–26 (MSAVSVYPMCVRASRGLLRLRQGARC), are a transit peptide targeting the mitochondrion. Residues 27–100 (STAPPLLDVV…QKENTAYAKK (74 aa)) lie on the Mitochondrial matrix side of the membrane. A disordered region spans residues 61-93 (LQQQQKSQEQPPPEGEDSGHKQDEQGEDKKQKE). Residues 77–93 (DSGHKQDEQGEDKKQKE) show a composition bias toward basic and acidic residues. Residues 101–121 (MVLRLAGIMGLGGTVGIVYIF) traverse the membrane as a helical segment. Residues 122-387 (GSNSVDEQGN…AGRFWSRKQQ (266 aa)) are Mitochondrial intermembrane-facing. An FCP1 homology domain is found at 178-321 (YYQPPYTLVL…YDLAAFLKTI (144 aa)).

The protein belongs to the TIM50 family. As to quaternary structure, component of the TIM23 complex at least composed of timm23, timm17 and timm50.

It is found in the mitochondrion inner membrane. Functionally, essential component of the TIM23 complex, a complex that mediates the translocation of transit peptide-containing proteins across the mitochondrial inner membrane. The sequence is that of Mitochondrial import inner membrane translocase subunit TIM50 (timm50) from Danio rerio (Zebrafish).